The sequence spans 385 residues: Aryl-alcohol dehydrogenase [NADP(+)] (385 aa).

The Proton donor role is filled by Tyr76. Residue 238–248 participates in NADP(+) binding; sequence NVLCAGKIRTD.

Belongs to the aldo/keto reductase family. Aldo/keto reductase 2 subfamily. Post-translationally, the N-terminus is blocked.

It catalyses the reaction an aromatic primary alcohol + NADP(+) = an aromatic aldehyde + NADPH + H(+). The protein is Aryl-alcohol dehydrogenase [NADP(+)] of Phanerodontia chrysosporium (White-rot fungus).